A 68-amino-acid polypeptide reads, in one-letter code: uncharacterized protein (68 aa).

This is an uncharacterized protein from Salmonella typhi.